A 228-amino-acid chain; its full sequence is NAD(P)H-hydrate epimerase (228 aa).

Positions 9–209 constitute a YjeF N-terminal domain; it reads VRAVERLAHR…LLGLTPAFLA (201 aa). Position 53 to 57 (53 to 57) interacts with (6S)-NADPHX; it reads NNGGD. K(+) contacts are provided by asparagine 54 and aspartate 115. (6S)-NADPHX-binding positions include 119-125 and aspartate 148; that span reads GIGLARP. Serine 151 contacts K(+).

This sequence belongs to the NnrE/AIBP family. Requires K(+) as cofactor.

The catalysed reaction is (6R)-NADHX = (6S)-NADHX. It carries out the reaction (6R)-NADPHX = (6S)-NADPHX. Functionally, catalyzes the epimerization of the S- and R-forms of NAD(P)HX, a damaged form of NAD(P)H that is a result of enzymatic or heat-dependent hydration. This is a prerequisite for the S-specific NAD(P)H-hydrate dehydratase to allow the repair of both epimers of NAD(P)HX. In Bordetella pertussis (strain CS), this protein is NAD(P)H-hydrate epimerase.